A 368-amino-acid polypeptide reads, in one-letter code: Alanine racemase (368 aa).

The Proton acceptor; specific for D-alanine role is filled by Lys40. The residue at position 40 (Lys40) is an N6-(pyridoxal phosphate)lysine. Residue Arg134 participates in substrate binding. The active-site Proton acceptor; specific for L-alanine is the Tyr263. Position 310 (Met310) interacts with substrate.

This sequence belongs to the alanine racemase family. Requires pyridoxal 5'-phosphate as cofactor.

The enzyme catalyses L-alanine = D-alanine. The protein operates within amino-acid biosynthesis; D-alanine biosynthesis; D-alanine from L-alanine: step 1/1. Catalyzes the interconversion of L-alanine and D-alanine. May also act on other amino acids. In Listeria monocytogenes serotype 4a (strain HCC23), this protein is Alanine racemase (alr).